We begin with the raw amino-acid sequence, 240 residues long: UDP-2,3-diacylglucosamine hydrolase (240 aa).

Residues D8, H10, D41, N79, and H114 each contribute to the Mn(2+) site. Substrate is bound at residue 79–80 (NR). Positions 122, 160, 164, 167, and 195 each coordinate substrate. Mn(2+)-binding residues include H195 and H197.

The protein belongs to the LpxH family. The cofactor is Mn(2+).

The protein resides in the cell inner membrane. The catalysed reaction is UDP-2-N,3-O-bis[(3R)-3-hydroxytetradecanoyl]-alpha-D-glucosamine + H2O = 2-N,3-O-bis[(3R)-3-hydroxytetradecanoyl]-alpha-D-glucosaminyl 1-phosphate + UMP + 2 H(+). It participates in glycolipid biosynthesis; lipid IV(A) biosynthesis; lipid IV(A) from (3R)-3-hydroxytetradecanoyl-[acyl-carrier-protein] and UDP-N-acetyl-alpha-D-glucosamine: step 4/6. Hydrolyzes the pyrophosphate bond of UDP-2,3-diacylglucosamine to yield 2,3-diacylglucosamine 1-phosphate (lipid X) and UMP by catalyzing the attack of water at the alpha-P atom. Involved in the biosynthesis of lipid A, a phosphorylated glycolipid that anchors the lipopolysaccharide to the outer membrane of the cell. The sequence is that of UDP-2,3-diacylglucosamine hydrolase from Yersinia enterocolitica serotype O:8 / biotype 1B (strain NCTC 13174 / 8081).